We begin with the raw amino-acid sequence, 318 residues long: Pheromone-regulated membrane protein 5 (318 aa).

A helical transmembrane segment spans residues 75–98; it reads GTVFIVVGGIAGVIFLAILLWWVI. A Phosphoserine modification is found at Ser129. The segment covering 238–247 has biased composition (low complexity); that stretch reads TISSSSASSL. Positions 238–318 are disordered; that stretch reads TISSSSASSL…HMLEGKEQDE (81 aa). Basic and acidic residues predominate over residues 250–261; it reads GNEKEVGEDIRK. A compositionally biased stretch (polar residues) spans 276 to 285; sequence SPESDGSVNR. Ser279, Ser282, and Ser288 each carry phosphoserine. Residues 309–318 are compositionally biased toward basic and acidic residues; the sequence is HMLEGKEQDE. Residue Lys314 forms a Glycyl lysine isopeptide (Lys-Gly) (interchain with G-Cter in ubiquitin) linkage.

It belongs to the PRM5 family.

The protein resides in the membrane. This Saccharomyces cerevisiae (strain ATCC 204508 / S288c) (Baker's yeast) protein is Pheromone-regulated membrane protein 5 (PRM5).